The sequence spans 57 residues: Small ribosomal subunit protein bS21 (57 aa).

The tract at residues 34-57 is disordered; it reads RKEHYIKPSVQKKNRQKNMRSKKR. Positions 43-57 are enriched in basic residues; it reads VQKKNRQKNMRSKKR.

It belongs to the bacterial ribosomal protein bS21 family.

This Aster yellows witches'-broom phytoplasma (strain AYWB) protein is Small ribosomal subunit protein bS21.